The chain runs to 540 residues: Tyrosinase (540 aa).

Residues 1–19 form the signal peptide; the sequence is MKSLFLSAVLLQFFETCWS. Topologically, residues 20–480 are lumenal, melanosome; it reads QFPRPCANSE…LQQAQQIWQW (461 aa). N87 carries N-linked (GlcNAc...) asparagine glycosylation. H182, H205, and H214 together coordinate Cu cation. N233, N293, and N340 each carry an N-linked (GlcNAc...) asparagine glycan. Positions 366 and 370 each coordinate Cu cation. N-linked (GlcNAc...) asparagine glycosylation occurs at N374. H393 contributes to the Cu cation binding site. Residues 481–501 traverse the membrane as a helical segment; it reads LLGAGILGALIATIVAAVIVF. Topologically, residues 502-540 are cytoplasmic; that stretch reads ARRKRRRNQKRKRAPSFGERQPLLQSSSEEGSSSYQTTL. The interval 511–540 is disordered; that stretch reads KRKRAPSFGERQPLLQSSSEEGSSSYQTTL. Residues 527-540 show a composition bias toward low complexity; it reads SSSEEGSSSYQTTL.

This sequence belongs to the tyrosinase family. Cu(2+) is required as a cofactor.

The protein resides in the melanosome membrane. It carries out the reaction 2 L-dopa + O2 = 2 L-dopaquinone + 2 H2O. The catalysed reaction is L-tyrosine + O2 = L-dopaquinone + H2O. Functionally, this is a copper-containing oxidase that functions in the formation of pigments such as melanins and other polyphenolic compounds. This is Tyrosinase (tyr) from Oryzias latipes (Japanese rice fish).